The primary structure comprises 903 residues: Valine--tRNA ligase (903 aa).

The segment covering 1–15 (MVCVTDQNNETTSQN) has biased composition (polar residues). Residues 1-21 (MVCVTDQNNETTSQNRADKLP) are disordered. Residues 61–71 (PNVTGQLHMGH) carry the 'HIGH' region motif. Residues 552–556 (KMSKS) carry the 'KMSKS' region motif. Lys-555 contributes to the ATP binding site. Residues 836–903 (TVDVAAERKR…RINKRLEELA (68 aa)) adopt a coiled-coil conformation.

The protein belongs to the class-I aminoacyl-tRNA synthetase family. ValS type 1 subfamily. As to quaternary structure, monomer.

The protein resides in the cytoplasm. The catalysed reaction is tRNA(Val) + L-valine + ATP = L-valyl-tRNA(Val) + AMP + diphosphate. Catalyzes the attachment of valine to tRNA(Val). As ValRS can inadvertently accommodate and process structurally similar amino acids such as threonine, to avoid such errors, it has a 'posttransfer' editing activity that hydrolyzes mischarged Thr-tRNA(Val) in a tRNA-dependent manner. The protein is Valine--tRNA ligase of Corynebacterium glutamicum (strain ATCC 13032 / DSM 20300 / JCM 1318 / BCRC 11384 / CCUG 27702 / LMG 3730 / NBRC 12168 / NCIMB 10025 / NRRL B-2784 / 534).